Reading from the N-terminus, the 338-residue chain is Nicotinate-nucleotide--dimethylbenzimidazole phosphoribosyltransferase (338 aa).

Residue E306 is the Proton acceptor of the active site.

The protein belongs to the CobT family.

It catalyses the reaction 5,6-dimethylbenzimidazole + nicotinate beta-D-ribonucleotide = alpha-ribazole 5'-phosphate + nicotinate + H(+). Its pathway is nucleoside biosynthesis; alpha-ribazole biosynthesis; alpha-ribazole from 5,6-dimethylbenzimidazole: step 1/2. In terms of biological role, catalyzes the synthesis of alpha-ribazole-5'-phosphate from nicotinate mononucleotide (NAMN) and 5,6-dimethylbenzimidazole (DMB). The protein is Nicotinate-nucleotide--dimethylbenzimidazole phosphoribosyltransferase of Cereibacter sphaeroides (strain ATCC 17023 / DSM 158 / JCM 6121 / CCUG 31486 / LMG 2827 / NBRC 12203 / NCIMB 8253 / ATH 2.4.1.) (Rhodobacter sphaeroides).